The following is a 305-amino-acid chain: Fructose-bisphosphate aldolase (305 aa).

A D-glyceraldehyde 3-phosphate-binding site is contributed by Ser-49. Asp-80 functions as the Proton donor in the catalytic mechanism. 4 residues coordinate Zn(2+): His-81, Asp-102, Glu-132, and His-178. A dihydroxyacetone phosphate-binding site is contributed by Gly-179. Residue His-208 coordinates Zn(2+). Dihydroxyacetone phosphate-binding positions include 209 to 211 (GAS) and 251 to 254 (NTDT).

It belongs to the class II fructose-bisphosphate aldolase family. As to quaternary structure, homotetramer. It depends on Zn(2+) as a cofactor.

It catalyses the reaction beta-D-fructose 1,6-bisphosphate = D-glyceraldehyde 3-phosphate + dihydroxyacetone phosphate. Its pathway is carbohydrate degradation; glycolysis; D-glyceraldehyde 3-phosphate and glycerone phosphate from D-glucose: step 4/4. In terms of biological role, catalyzes the aldol condensation of dihydroxyacetone phosphate (DHAP or glycerone-phosphate) with glyceraldehyde 3-phosphate (G3P) to form fructose 1,6-bisphosphate (FBP) in gluconeogenesis and the reverse reaction in glycolysis. In Thermus caldophilus, this protein is Fructose-bisphosphate aldolase.